A 142-amino-acid polypeptide reads, in one-letter code: Transcriptional regulator MraZ (142 aa).

SpoVT-AbrB domains are found at residues 5–51 and 77–120; these read ASAL…PRPE and AADV…DAAT.

This sequence belongs to the MraZ family. As to quaternary structure, forms oligomers.

It localises to the cytoplasm. Its subcellular location is the nucleoid. This is Transcriptional regulator MraZ from Ralstonia nicotianae (strain ATCC BAA-1114 / GMI1000) (Ralstonia solanacearum).